A 145-amino-acid chain; its full sequence is D-aminoacyl-tRNA deacylase (145 aa).

The short motif at 137–138 (GP) is the Gly-cisPro motif, important for rejection of L-amino acids element.

Belongs to the DTD family. As to quaternary structure, homodimer.

It localises to the cytoplasm. It catalyses the reaction glycyl-tRNA(Ala) + H2O = tRNA(Ala) + glycine + H(+). The catalysed reaction is a D-aminoacyl-tRNA + H2O = a tRNA + a D-alpha-amino acid + H(+). Functionally, an aminoacyl-tRNA editing enzyme that deacylates mischarged D-aminoacyl-tRNAs. Also deacylates mischarged glycyl-tRNA(Ala), protecting cells against glycine mischarging by AlaRS. Acts via tRNA-based rather than protein-based catalysis; rejects L-amino acids rather than detecting D-amino acids in the active site. By recycling D-aminoacyl-tRNA to D-amino acids and free tRNA molecules, this enzyme counteracts the toxicity associated with the formation of D-aminoacyl-tRNA entities in vivo and helps enforce protein L-homochirality. The polypeptide is D-aminoacyl-tRNA deacylase (Aeromonas hydrophila subsp. hydrophila (strain ATCC 7966 / DSM 30187 / BCRC 13018 / CCUG 14551 / JCM 1027 / KCTC 2358 / NCIMB 9240 / NCTC 8049)).